A 247-amino-acid polypeptide reads, in one-letter code: Carboxy-S-adenosyl-L-methionine synthase (247 aa).

S-adenosyl-L-methionine is bound by residues tyrosine 40, 65-67 (GAS), 90-91 (DN), 122-123 (DI), asparagine 137, and arginine 204.

This sequence belongs to the class I-like SAM-binding methyltransferase superfamily. Cx-SAM synthase family. As to quaternary structure, homodimer.

It catalyses the reaction prephenate + S-adenosyl-L-methionine = carboxy-S-adenosyl-L-methionine + 3-phenylpyruvate + H2O. Catalyzes the conversion of S-adenosyl-L-methionine (SAM) to carboxy-S-adenosyl-L-methionine (Cx-SAM). This chain is Carboxy-S-adenosyl-L-methionine synthase, found in Ectopseudomonas mendocina (strain ymp) (Pseudomonas mendocina).